The chain runs to 87 residues: Large ribosomal subunit protein eL31 (87 aa).

Belongs to the eukaryotic ribosomal protein eL31 family.

This chain is Large ribosomal subunit protein eL31 (rpl31e), found in Methanocaldococcus jannaschii (strain ATCC 43067 / DSM 2661 / JAL-1 / JCM 10045 / NBRC 100440) (Methanococcus jannaschii).